We begin with the raw amino-acid sequence, 94 residues long: Large ribosomal subunit protein bL27 (94 aa).

The propeptide occupies 1–9; the sequence is MLKLNLQFF.

It belongs to the bacterial ribosomal protein bL27 family. In terms of processing, the N-terminus is cleaved by ribosomal processing cysteine protease Prp.

The polypeptide is Large ribosomal subunit protein bL27 (Staphylococcus aureus (strain Mu3 / ATCC 700698)).